A 606-amino-acid polypeptide reads, in one-letter code: Threonine dehydratase 1 biosynthetic, chloroplastic (606 aa).

Residue lysine 154 is modified to N6-(pyridoxal phosphate)lysine. 2 consecutive ACT-like domains span residues 432–504 and 526–597; these read AVLA…NLTD and LLCR…MESL.

Belongs to the serine/threonine dehydratase family. The cofactor is pyridoxal 5'-phosphate. Expressed constitutively in all tissues examined including root, stem, petiole, leaf, immature flower bud, unopened flower and opened flower with the highest expression in opened flower and lowest in leaf.

It localises to the plastid. The protein resides in the chloroplast. The catalysed reaction is L-threonine = 2-oxobutanoate + NH4(+). It participates in amino-acid biosynthesis; L-isoleucine biosynthesis; 2-oxobutanoate from L-threonine: step 1/1. Strongly inhibited by 1 mM isoleucine. In terms of biological role, has a housekeeping role in isoleucine biosynthesis. This chain is Threonine dehydratase 1 biosynthetic, chloroplastic, found in Solanum lycopersicum (Tomato).